A 338-amino-acid chain; its full sequence is Formamidase (338 aa).

The CN hydrolase domain occupies 15–257 (VVIGLAQLAL…DEIVCCELRP (243 aa)). Glu-61 functions as the Proton acceptor in the catalytic mechanism. The Proton donor role is filled by Lys-130. The active-site Nucleophile is the Cys-163.

Belongs to the carbon-nitrogen hydrolase superfamily. Aliphatic amidase family.

The enzyme catalyses formamide + H2O = formate + NH4(+). Is an aliphatic amidase with a restricted substrate specificity, as it only hydrolyzes formamide. The chain is Formamidase from Pseudomonas syringae pv. syringae (strain B728a).